We begin with the raw amino-acid sequence, 267 residues long: 2-keto-3-deoxy-L-rhamnonate aldolase (267 aa).

The Proton acceptor role is filled by H49. Q151 contributes to the substrate binding site. Position 153 (E153) interacts with Mg(2+). Residues A178 and D179 each coordinate substrate. Residue D179 coordinates Mg(2+).

The protein belongs to the HpcH/HpaI aldolase family. KDR aldolase subfamily. Homohexamer. Requires Mg(2+) as cofactor.

It carries out the reaction 2-dehydro-3-deoxy-L-rhamnonate = (S)-lactaldehyde + pyruvate. Catalyzes the reversible retro-aldol cleavage of 2-keto-3-deoxy-L-rhamnonate (KDR) to pyruvate and lactaldehyde. This Salmonella typhi protein is 2-keto-3-deoxy-L-rhamnonate aldolase.